Reading from the N-terminus, the 478-residue chain is Membrane-bound lytic murein transglycosylase F (478 aa).

Positions 1–29 (MFPDSSYLFSMRSLSRFLIAIFGCGALLA) are cleaved as a signal peptide. The segment at 30–269 (SCDSFERSVL…RLLDRYYGHI (240 aa)) is non-LT domain. Positions 271-478 (RLHHTDVNGI…RKEDDSWQEF (208 aa)) are LT domain. Residue E316 is part of the active site.

The protein in the N-terminal section; belongs to the bacterial solute-binding protein 3 family. It in the C-terminal section; belongs to the transglycosylase Slt family.

It is found in the cell outer membrane. The catalysed reaction is Exolytic cleavage of the (1-&gt;4)-beta-glycosidic linkage between N-acetylmuramic acid (MurNAc) and N-acetylglucosamine (GlcNAc) residues in peptidoglycan, from either the reducing or the non-reducing ends of the peptidoglycan chains, with concomitant formation of a 1,6-anhydrobond in the MurNAc residue.. Murein-degrading enzyme that degrades murein glycan strands and insoluble, high-molecular weight murein sacculi, with the concomitant formation of a 1,6-anhydromuramoyl product. Lytic transglycosylases (LTs) play an integral role in the metabolism of the peptidoglycan (PG) sacculus. Their lytic action creates space within the PG sacculus to allow for its expansion as well as for the insertion of various structures such as secretion systems and flagella. The protein is Membrane-bound lytic murein transglycosylase F of Nitrosospira multiformis (strain ATCC 25196 / NCIMB 11849 / C 71).